We begin with the raw amino-acid sequence, 508 residues long: Probable glycine dehydrogenase (decarboxylating) subunit 2 (508 aa).

N6-(pyridoxal phosphate)lysine is present on K277.

The protein belongs to the GcvP family. C-terminal subunit subfamily. As to quaternary structure, the glycine cleavage system is composed of four proteins: P, T, L and H. In this organism, the P 'protein' is a heterodimer of two subunits. Requires pyridoxal 5'-phosphate as cofactor.

It carries out the reaction N(6)-[(R)-lipoyl]-L-lysyl-[glycine-cleavage complex H protein] + glycine + H(+) = N(6)-[(R)-S(8)-aminomethyldihydrolipoyl]-L-lysyl-[glycine-cleavage complex H protein] + CO2. In terms of biological role, the glycine cleavage system catalyzes the degradation of glycine. The P protein binds the alpha-amino group of glycine through its pyridoxal phosphate cofactor; CO(2) is released and the remaining methylamine moiety is then transferred to the lipoamide cofactor of the H protein. This is Probable glycine dehydrogenase (decarboxylating) subunit 2 from Saccharolobus solfataricus (strain ATCC 35092 / DSM 1617 / JCM 11322 / P2) (Sulfolobus solfataricus).